The following is a 252-amino-acid chain: Enolase-phosphatase E1 (252 aa).

Positions 14 and 16 each coordinate Mg(2+). Residues 143-144 (SS) and K177 contribute to the substrate site. D202 is a Mg(2+) binding site.

The protein belongs to the HAD-like hydrolase superfamily. MasA/MtnC family. Monomer. Requires Mg(2+) as cofactor.

It localises to the cytoplasm. The protein resides in the nucleus. The catalysed reaction is 5-methylsulfanyl-2,3-dioxopentyl phosphate + H2O = 1,2-dihydroxy-5-(methylsulfanyl)pent-1-en-3-one + phosphate. The protein operates within amino-acid biosynthesis; L-methionine biosynthesis via salvage pathway; L-methionine from S-methyl-5-thio-alpha-D-ribose 1-phosphate: step 3/6. Its pathway is amino-acid biosynthesis; L-methionine biosynthesis via salvage pathway; L-methionine from S-methyl-5-thio-alpha-D-ribose 1-phosphate: step 4/6. In terms of biological role, bifunctional enzyme that catalyzes the enolization of 2,3-diketo-5-methylthiopentyl-1-phosphate (DK-MTP-1-P) into the intermediate 2-hydroxy-3-keto-5-methylthiopentenyl-1-phosphate (HK-MTPenyl-1-P), which is then dephosphorylated to form the acireductone 1,2-dihydroxy-3-keto-5-methylthiopentene (DHK-MTPene). The sequence is that of Enolase-phosphatase E1 from Drosophila pseudoobscura pseudoobscura (Fruit fly).